The primary structure comprises 51 residues: Ribosome biogenesis protein Nop10 (51 aa).

It belongs to the NOP10 family.

Involved in ribosome biogenesis; more specifically in 18S rRNA pseudouridylation and in cleavage of pre-rRNA. The chain is Ribosome biogenesis protein Nop10 from Methanosarcina barkeri (strain Fusaro / DSM 804).